The primary structure comprises 206 residues: Imidazoleglycerol-phosphate dehydratase (206 aa).

This sequence belongs to the imidazoleglycerol-phosphate dehydratase family.

The protein resides in the cytoplasm. The enzyme catalyses D-erythro-1-(imidazol-4-yl)glycerol 3-phosphate = 3-(imidazol-4-yl)-2-oxopropyl phosphate + H2O. It participates in amino-acid biosynthesis; L-histidine biosynthesis; L-histidine from 5-phospho-alpha-D-ribose 1-diphosphate: step 6/9. This Leptospira interrogans serogroup Icterohaemorrhagiae serovar copenhageni (strain Fiocruz L1-130) protein is Imidazoleglycerol-phosphate dehydratase.